The primary structure comprises 343 residues: Lipase chaperone (343 aa).

A helical membrane pass occupies residues 7–27 (IYLGIGLVALLMIFIYWLMPK).

Belongs to the lipase chaperone family.

It localises to the cell inner membrane. In terms of biological role, may be involved in the folding of the extracellular lipase during its passage through the periplasm. The protein is Lipase chaperone (lifO) of Acinetobacter baylyi (strain ATCC 33305 / BD413 / ADP1).